The primary structure comprises 466 residues: UDP-N-acetylmuramoylalanine--D-glutamate ligase (466 aa).

Gly-122 to Thr-128 contacts ATP.

The protein belongs to the MurCDEF family.

It is found in the cytoplasm. It carries out the reaction UDP-N-acetyl-alpha-D-muramoyl-L-alanine + D-glutamate + ATP = UDP-N-acetyl-alpha-D-muramoyl-L-alanyl-D-glutamate + ADP + phosphate + H(+). It functions in the pathway cell wall biogenesis; peptidoglycan biosynthesis. Cell wall formation. Catalyzes the addition of glutamate to the nucleotide precursor UDP-N-acetylmuramoyl-L-alanine (UMA). This chain is UDP-N-acetylmuramoylalanine--D-glutamate ligase, found in Aromatoleum aromaticum (strain DSM 19018 / LMG 30748 / EbN1) (Azoarcus sp. (strain EbN1)).